We begin with the raw amino-acid sequence, 381 residues long: uncharacterized protein (381 aa).

Residues 1–16 (MQTLLFYFFFINLIFA) form the signal peptide. At 17–303 (HDLNVKTYKP…KILENSPCPN (287 aa)) the chain is on the lumenal side. An intrachain disulfide couples cysteine 118 to cysteine 149. 6 N-linked (GlcNAc...) asparagine glycosylation sites follow: asparagine 133, asparagine 192, asparagine 225, asparagine 243, asparagine 246, and asparagine 287. The chain crosses the membrane as a helical span at residues 304 to 324 (QPSIQPFGILMMLVSTIYGNF). Topologically, residues 325–359 (KNLYNCIKRNTIGYIYNSIYDFWITEGMLFPMRNM) are cytoplasmic. A helical transmembrane segment spans residues 360–380 (DIFKITAISIGLSIPVFLWLL). Lysine 381 is a topological domain (lumenal).

It belongs to the calreticulin family.

The protein localises to the endoplasmic reticulum membrane. This is an uncharacterized protein from Schizosaccharomyces pombe (strain 972 / ATCC 24843) (Fission yeast).